The primary structure comprises 524 residues: Light-independent protochlorophyllide reductase subunit B (524 aa).

Residue Asp-36 participates in [4Fe-4S] cluster binding. Catalysis depends on Asp-290, which acts as the Proton donor. 425-426 (GL) serves as a coordination point for substrate.

It belongs to the ChlB/BchB/BchZ family. Protochlorophyllide reductase is composed of three subunits; ChlL, ChlN and ChlB. Forms a heterotetramer of two ChlB and two ChlN subunits. [4Fe-4S] cluster is required as a cofactor.

It catalyses the reaction chlorophyllide a + oxidized 2[4Fe-4S]-[ferredoxin] + 2 ADP + 2 phosphate = protochlorophyllide a + reduced 2[4Fe-4S]-[ferredoxin] + 2 ATP + 2 H2O. The protein operates within porphyrin-containing compound metabolism; chlorophyll biosynthesis (light-independent). In terms of biological role, component of the dark-operative protochlorophyllide reductase (DPOR) that uses Mg-ATP and reduced ferredoxin to reduce ring D of protochlorophyllide (Pchlide) to form chlorophyllide a (Chlide). This reaction is light-independent. The NB-protein (ChlN-ChlB) is the catalytic component of the complex. The chain is Light-independent protochlorophyllide reductase subunit B from Parasynechococcus marenigrum (strain WH8102).